Here is an 804-residue protein sequence, read N- to C-terminus: Leucine--tRNA ligase (804 aa).

The short motif at 40 to 51 (PYPSGAGLHVGH) is the 'HIGH' region element. The 'KMSKS' region motif lies at 576–580 (KMSKS). Residue K579 coordinates ATP.

The protein belongs to the class-I aminoacyl-tRNA synthetase family.

It localises to the cytoplasm. It catalyses the reaction tRNA(Leu) + L-leucine + ATP = L-leucyl-tRNA(Leu) + AMP + diphosphate. In Staphylococcus aureus (strain Mu3 / ATCC 700698), this protein is Leucine--tRNA ligase.